The following is a 488-amino-acid chain: Regulatory protein ViaA (488 aa).

It belongs to the ViaA family. As to quaternary structure, homodimer. Interacts with RavA.

The protein localises to the cytoplasm. Its function is as follows. Component of the RavA-ViaA chaperone complex, which may act on the membrane to optimize the function of some of the respiratory chains. ViaA stimulates the ATPase activity of RavA. The sequence is that of Regulatory protein ViaA from Yersinia enterocolitica serotype O:8 / biotype 1B (strain NCTC 13174 / 8081).